The chain runs to 901 residues: Desmocollin-2 (901 aa).

The N-terminal stretch at 1 to 27 (MEAARPSGSWNGALCRLLLLTLAILIF) is a signal peptide. The propeptide occupies 28–135 (ASDACKNVTL…KEKVLRRAKR (108 aa)). Asparagine 34 and asparagine 166 each carry an N-linked (GlcNAc...) asparagine glycan. 5 Cadherin domains span residues 136 to 243 (RWAP…YPIF), 244 to 355 (TEET…LPTF), 356 to 471 (TRTS…GPEC), 472 to 579 (NPPI…FIPK), and 580 to 694 (KTVI…QLGK). The Extracellular segment spans residues 136 to 694 (RWAPIPCSML…IGGGGVQLGK (559 aa)). A glycan (N-linked (GlcNAc...) (complex) asparagine) is linked at asparagine 392. 2 N-linked (GlcNAc...) asparagine glycosylation sites follow: asparagine 546 and asparagine 629. Residues 695 to 715 (WAILAILLGIALLFCILFTLV) traverse the membrane as a helical segment. The Cytoplasmic segment spans residues 716 to 901 (CGASGTSKQP…RTLAEACMKR (186 aa)). Phosphoserine occurs at positions 864, 868, and 873.

Interacts with DSP, PKP2 and JUP. Interacts with DSG3; the interaction may limit the interaction of DSC3 with p38MAPK family members and therefore repress p38MAPK signaling activation. In terms of tissue distribution, expressed at intercalated disks in the heart, where it is colocalized with CDH2 (at protein level). Expressed in intestinal mucosal cells (at protein level).

The protein resides in the cell membrane. Its subcellular location is the cell junction. It localises to the desmosome. Functionally, a component of desmosome cell-cell junctions which are required for positive regulation of cellular adhesion. Promotes timely incorporation of DSG2 into desmosome intercellular junctions and promotes interaction of desmosome cell junctions with intermediate filament cytokeratin, via modulation of DSP phosphorylation. Plays an important role in desmosome-mediated maintenance of intestinal epithelial cell intercellular adhesion strength and barrier function. Positively regulates wound healing of intestinal mucosa via promotion of epithelial cell migration, and also plays a role in mechanotransduction of force between intestinal epithelial cells and extracellular matrix. May contribute to epidermal cell positioning (stratification) by mediating differential adhesiveness between cells that express different isoforms. May promote p38MAPK signaling activation that facilitates keratinocyte migration. In Homo sapiens (Human), this protein is Desmocollin-2.